Consider the following 329-residue polypeptide: Diaminopimelate epimerase (329 aa).

Residues Asn-14 and Asn-73 each coordinate substrate. Cys-82 functions as the Proton donor in the catalytic mechanism. Residues 83–84 (GN), Asn-170, Asn-206, and 224–225 (ER) contribute to the substrate site. Cys-233 serves as the catalytic Proton acceptor. Position 234–235 (234–235 (GT)) interacts with substrate.

The protein belongs to the diaminopimelate epimerase family. As to quaternary structure, homodimer.

Its subcellular location is the cytoplasm. It carries out the reaction (2S,6S)-2,6-diaminopimelate = meso-2,6-diaminopimelate. Its pathway is amino-acid biosynthesis; L-lysine biosynthesis via DAP pathway; DL-2,6-diaminopimelate from LL-2,6-diaminopimelate: step 1/1. Its function is as follows. Catalyzes the stereoinversion of LL-2,6-diaminopimelate (L,L-DAP) to meso-diaminopimelate (meso-DAP), a precursor of L-lysine and an essential component of the bacterial peptidoglycan. The polypeptide is Diaminopimelate epimerase (Listeria monocytogenes serotype 4b (strain F2365)).